The primary structure comprises 156 residues: ATP synthase subunit b (156 aa).

A helical membrane pass occupies residues 7 to 27 (LFVQAIVFLILVLFTMKFVWP).

The protein belongs to the ATPase B chain family. As to quaternary structure, F-type ATPases have 2 components, F(1) - the catalytic core - and F(0) - the membrane proton channel. F(1) has five subunits: alpha(3), beta(3), gamma(1), delta(1), epsilon(1). F(0) has three main subunits: a(1), b(2) and c(10-14). The alpha and beta chains form an alternating ring which encloses part of the gamma chain. F(1) is attached to F(0) by a central stalk formed by the gamma and epsilon chains, while a peripheral stalk is formed by the delta and b chains.

Its subcellular location is the cell inner membrane. In terms of biological role, f(1)F(0) ATP synthase produces ATP from ADP in the presence of a proton or sodium gradient. F-type ATPases consist of two structural domains, F(1) containing the extramembraneous catalytic core and F(0) containing the membrane proton channel, linked together by a central stalk and a peripheral stalk. During catalysis, ATP synthesis in the catalytic domain of F(1) is coupled via a rotary mechanism of the central stalk subunits to proton translocation. Component of the F(0) channel, it forms part of the peripheral stalk, linking F(1) to F(0). This chain is ATP synthase subunit b, found in Paracidovorax citrulli (strain AAC00-1) (Acidovorax citrulli).